The sequence spans 157 residues: MLKTTQKSLLIFIVVFSLIFGTDQAIKYAILEGFRYESLIIDIVLVFNKGVAFSLLSFLEGGLKYLQILLILGLFIFLMCQKELFKNHAIEFGMVFGAGVSNVLDRFVHGGVVDYVYYHYGFDFAIFNFADVMIDVGVGVLLLRQFFFKQKQNKIKA.

A run of 3 helical transmembrane segments spans residues Leu-10–Ile-30, Phe-58–Leu-78, and Leu-84–Leu-104. Residues Asp-114 and Asp-131 contribute to the active site. The chain crosses the membrane as a helical span at residues Phe-122 to Leu-142.

This sequence belongs to the peptidase A8 family.

The protein resides in the cell inner membrane. The catalysed reaction is Release of signal peptides from bacterial membrane prolipoproteins. Hydrolyzes -Xaa-Yaa-Zaa-|-(S,diacylglyceryl)Cys-, in which Xaa is hydrophobic (preferably Leu), and Yaa (Ala or Ser) and Zaa (Gly or Ala) have small, neutral side chains.. The protein operates within protein modification; lipoprotein biosynthesis (signal peptide cleavage). In terms of biological role, this protein specifically catalyzes the removal of signal peptides from prolipoproteins. The sequence is that of Lipoprotein signal peptidase from Helicobacter pylori (strain Shi470).